Reading from the N-terminus, the 313-residue chain is Ribosomal RNA small subunit methyltransferase H (313 aa).

S-adenosyl-L-methionine is bound by residues 33-35, Asp-53, Phe-80, Asp-102, and Gln-109; that span reads GGH. A disordered region spans residues 291 to 313; it reads SDEEMRANPRAQSAKLRAAEKIR.

This sequence belongs to the methyltransferase superfamily. RsmH family.

The protein localises to the cytoplasm. It catalyses the reaction cytidine(1402) in 16S rRNA + S-adenosyl-L-methionine = N(4)-methylcytidine(1402) in 16S rRNA + S-adenosyl-L-homocysteine + H(+). Functionally, specifically methylates the N4 position of cytidine in position 1402 (C1402) of 16S rRNA. The polypeptide is Ribosomal RNA small subunit methyltransferase H (Heliobacterium modesticaldum (strain ATCC 51547 / Ice1)).